The following is an 83-amino-acid chain: Small ribosomal subunit protein bS16 (83 aa).

It belongs to the bacterial ribosomal protein bS16 family.

The polypeptide is Small ribosomal subunit protein bS16 (Borrelia turicatae (strain 91E135)).